Reading from the N-terminus, the 520-residue chain is MANKKSTVLMILDGWGYREETSSNAIHQANTPVLDNLKAKYPNMLIDTSGMAVGLPEGQMGNSEVGHVNLGAGRVVYQDFTRITKAISDGDFIENPTLCHAVDTATSNNKAVHIFGLLSPGGVHSHEEHIFAMMELAKKRGAQKVYLHAFLDGRDTPPRSAQASLEKAQQKFSKLFTETDTGEGQIASVIGRYYAMDRDQRWDRVEAAYNLMVNGEGLHQYNSALDALAAAYERNENDEFVGASAITSPSGKAIKVNDGDALIFMNFRADRARQFSRCFTDTNFNGFERKRIPAISNFVMLTQYAADIDAPSAFAPTPLTNVMGEWLAKHNKTQLRISETEKYAHVTFFFSGGKEDMFTGEERILVPSPDVATYDLQPEMNSTLLTDKLVGAIESGKYDFIVCNYPNGDMVGHTGSFDAAVKACEAVDTCVGRVVKAAQDNGGECLITADHGNAEQMQDPVSGQAHTAHTCEPVPLIYVGRNASPAASGTLSDISPSVLHLMGMEQPQEMTGSVLMQLIK.

Mn(2+) is bound by residues aspartate 13 and serine 63. Serine 63 acts as the Phosphoserine intermediate in catalysis. Substrate-binding positions include histidine 124, 154-155, arginine 192, arginine 198, 268-271, and lysine 342; these read RD and RADR. Residues aspartate 409, histidine 413, aspartate 450, histidine 451, and histidine 469 each contribute to the Mn(2+) site.

It belongs to the BPG-independent phosphoglycerate mutase family. As to quaternary structure, monomer. Mn(2+) is required as a cofactor.

It carries out the reaction (2R)-2-phosphoglycerate = (2R)-3-phosphoglycerate. The protein operates within carbohydrate degradation; glycolysis; pyruvate from D-glyceraldehyde 3-phosphate: step 3/5. Its function is as follows. Catalyzes the interconversion of 2-phosphoglycerate and 3-phosphoglycerate. This is 2,3-bisphosphoglycerate-independent phosphoglycerate mutase from Colwellia psychrerythraea (strain 34H / ATCC BAA-681) (Vibrio psychroerythus).